We begin with the raw amino-acid sequence, 198 residues long: Glycerol-3-phosphate acyltransferase (198 aa).

4 helical membrane passes run 4 to 24 (TYLL…LVVG), 71 to 91 (LPMI…AVLG), 113 to 133 (LLCY…TLLF), and 147 to 167 (VVAV…AMCL).

It belongs to the PlsY family. As to quaternary structure, probably interacts with PlsX.

The protein localises to the cell membrane. It catalyses the reaction an acyl phosphate + sn-glycerol 3-phosphate = a 1-acyl-sn-glycero-3-phosphate + phosphate. It functions in the pathway lipid metabolism; phospholipid metabolism. In terms of biological role, catalyzes the transfer of an acyl group from acyl-phosphate (acyl-PO(4)) to glycerol-3-phosphate (G3P) to form lysophosphatidic acid (LPA). This enzyme utilizes acyl-phosphate as fatty acyl donor, but not acyl-CoA or acyl-ACP. This is Glycerol-3-phosphate acyltransferase from Bacillus cereus (strain G9842).